Consider the following 396-residue polypeptide: Elongation factor Tu 1 (396 aa).

The tr-type G domain maps to 10–206; that stretch reads KPHVNIGTIG…AVDEYIPTPE (197 aa). The G1 stretch occupies residues 19-26; the sequence is GHVDHGKT. 19–26 is a binding site for GTP; sequence GHVDHGKT. Residue threonine 26 coordinates Mg(2+). A G2 region spans residues 60–64; the sequence is GITIN. Residues 81–84 are G3; sequence DCPG. GTP is bound by residues 81 to 85 and 136 to 139; these read DCPGH and NKVD. The tract at residues 136–139 is G4; sequence NKVD. A G5 region spans residues 174-176; the sequence is SAL.

The protein belongs to the TRAFAC class translation factor GTPase superfamily. Classic translation factor GTPase family. EF-Tu/EF-1A subfamily. In terms of assembly, monomer.

The protein localises to the cytoplasm. The catalysed reaction is GTP + H2O = GDP + phosphate + H(+). GTP hydrolase that promotes the GTP-dependent binding of aminoacyl-tRNA to the A-site of ribosomes during protein biosynthesis. The sequence is that of Elongation factor Tu 1 from Hyphomonas neptunium (strain ATCC 15444).